Here is a 191-residue protein sequence, read N- to C-terminus: A-type ATP synthase subunit E (191 aa).

Belongs to the V-ATPase E subunit family. In terms of assembly, has multiple subunits with at least A(3), B(3), C, D, E, F, H, I and proteolipid K(x). The N-terminus is blocked.

It is found in the cell membrane. Component of the A-type ATP synthase that produces ATP from ADP in the presence of a proton gradient across the membrane. The sequence is that of A-type ATP synthase subunit E from Sulfurisphaera tokodaii (strain DSM 16993 / JCM 10545 / NBRC 100140 / 7) (Sulfolobus tokodaii).